The primary structure comprises 57 residues: Large ribosomal subunit protein bL32 (57 aa).

The interval 1-23 (MAVPKKRTSKTRTNRRRAQKKAR) is disordered.

It belongs to the bacterial ribosomal protein bL32 family.

In Natranaerobius thermophilus (strain ATCC BAA-1301 / DSM 18059 / JW/NM-WN-LF), this protein is Large ribosomal subunit protein bL32.